Consider the following 319-residue polypeptide: Ribose-phosphate pyrophosphokinase (319 aa).

ATP is bound by residues 41 to 43 (DGE) and 100 to 101 (RQ). Mg(2+) is bound by residues His-134 and Asp-176. Lys-199 is a catalytic residue. D-ribose 5-phosphate contacts are provided by residues Arg-201, Asp-225, and 229–233 (DTAGT).

This sequence belongs to the ribose-phosphate pyrophosphokinase family. Class I subfamily. Homohexamer. Mg(2+) is required as a cofactor.

It is found in the cytoplasm. It carries out the reaction D-ribose 5-phosphate + ATP = 5-phospho-alpha-D-ribose 1-diphosphate + AMP + H(+). It functions in the pathway metabolic intermediate biosynthesis; 5-phospho-alpha-D-ribose 1-diphosphate biosynthesis; 5-phospho-alpha-D-ribose 1-diphosphate from D-ribose 5-phosphate (route I): step 1/1. In terms of biological role, involved in the biosynthesis of the central metabolite phospho-alpha-D-ribosyl-1-pyrophosphate (PRPP) via the transfer of pyrophosphoryl group from ATP to 1-hydroxyl of ribose-5-phosphate (Rib-5-P). This Clostridium perfringens (strain 13 / Type A) protein is Ribose-phosphate pyrophosphokinase.